The sequence spans 632 residues: Putative golgin subfamily A member 8I (632 aa).

A disordered region spans residues 1-77 (MAEETQHNKL…SSATLKDLES (77 aa)). The span at 38–50 (TNGSIPQTATSGG) shows a compositional bias: polar residues. 2 coiled-coil regions span residues 86–154 (LDSR…HMKR) and 209–421 (KLEQ…SLMA). Residues 352-362 (KQEERIQEQHK) are compositionally biased toward basic and acidic residues. Disordered stretches follow at residues 352–383 (KQEERIQEQHKSLQQLAKPQSVFEEPNNENKS), 423–445 (PGEGHGGEHLDSEGEEAPQPMPS), 496–524 (LSEPGGRAKDAALGGGHHQAGAQGGDEGE), and 550–569 (AHNPADEPGPGAPAPQELGA). Gly residues predominate over residues 508-520 (LGGGHHQAGAQGG). A golgi-targeting domain region spans residues 529–632 (AADGIAAYSN…CWAWLPRRRR (104 aa)). A compositionally biased stretch (low complexity) spans 555-568 (DEPGPGAPAPQELG).

Belongs to the GOLGA8 family.

The protein localises to the golgi apparatus. It localises to the golgi stack membrane. Its function is as follows. May be involved in maintaining Golgi structure. The chain is Putative golgin subfamily A member 8I from Homo sapiens (Human).